Reading from the N-terminus, the 502-residue chain is Probable glycine dehydrogenase (decarboxylating) subunit 2 (502 aa).

K273 is subject to N6-(pyridoxal phosphate)lysine.

The protein belongs to the GcvP family. C-terminal subunit subfamily. In terms of assembly, the glycine cleavage system is composed of four proteins: P, T, L and H. In this organism, the P 'protein' is a heterodimer of two subunits. Pyridoxal 5'-phosphate serves as cofactor.

It carries out the reaction N(6)-[(R)-lipoyl]-L-lysyl-[glycine-cleavage complex H protein] + glycine + H(+) = N(6)-[(R)-S(8)-aminomethyldihydrolipoyl]-L-lysyl-[glycine-cleavage complex H protein] + CO2. Its function is as follows. The glycine cleavage system catalyzes the degradation of glycine. The P protein binds the alpha-amino group of glycine through its pyridoxal phosphate cofactor; CO(2) is released and the remaining methylamine moiety is then transferred to the lipoamide cofactor of the H protein. The protein is Probable glycine dehydrogenase (decarboxylating) subunit 2 of Pyrococcus furiosus (strain ATCC 43587 / DSM 3638 / JCM 8422 / Vc1).